The chain runs to 675 residues: Serine/threonine-protein kinase ATG1 (675 aa).

The Protein kinase domain maps to 25–328 (FVIGGEIGKG…FEDFFNDPVV (304 aa)). ATP contacts are provided by residues 31–39 (IGKGSFAQV) and K54. The active-site Proton acceptor is the D168. Over residues 339-374 (DIPKVEQKPSRDLRSLEADPQREQSELAKSPRERPL) the composition is skewed to basic and acidic residues. Disordered regions lie at residues 339–455 (DIPK…ERKL) and 501–577 (RLTS…TTRS). Composition is skewed to polar residues over residues 390-399 (ANVSARTGQS), 516-538 (ATQQ…SAVQ), and 556-565 (ASRSLNTSSA).

Belongs to the protein kinase superfamily. Ser/Thr protein kinase family. APG1/unc-51/ULK1 subfamily. Homodimer. Forms a ternary complex with ATG13 and ATG17.

The protein localises to the cytoplasm. It is found in the preautophagosomal structure membrane. The enzyme catalyses L-seryl-[protein] + ATP = O-phospho-L-seryl-[protein] + ADP + H(+). It carries out the reaction L-threonyl-[protein] + ATP = O-phospho-L-threonyl-[protein] + ADP + H(+). Serine/threonine protein kinase involved in the cytoplasm to vacuole transport (Cvt) and found to be essential in autophagy, where it is required for the formation of autophagosomes. Involved in the clearance of protein aggregates which cannot be efficiently cleared by the proteasome. Required for selective autophagic degradation of the nucleus (nucleophagy) as well as for mitophagy which contributes to regulate mitochondrial quantity and quality by eliminating the mitochondria to a basal level to fulfill cellular energy requirements and preventing excess ROS production. Also involved in endoplasmic reticulum-specific autophagic process, in selective removal of ER-associated degradation (ERAD) substrates. Plays a key role in ATG9 and ATG23 cycling through the pre-autophagosomal structure and is necessary to promote ATG18 binding to ATG9 through phosphorylation of ATG9. Catalyzes phosphorylation of ATG4, decreasing the interaction between ATG4 and ATG8 and impairing deconjugation of PE-conjugated forms of ATG8. The protein is Serine/threonine-protein kinase ATG1 of Colletotrichum lindemuthianum (Bean anthracnose fungus).